Consider the following 209-residue polypeptide: Guanylate kinase (209 aa).

Positions 9–188 (GIMLVISSPS…SVYQIKCIFT (180 aa)) constitute a Guanylate kinase-like domain. Residue 16–23 (SPSGGGKT) coordinates ATP.

The protein belongs to the guanylate kinase family.

The protein resides in the cytoplasm. It carries out the reaction GMP + ATP = GDP + ADP. Its function is as follows. Essential for recycling GMP and indirectly, cGMP. This is Guanylate kinase from Ehrlichia chaffeensis (strain ATCC CRL-10679 / Arkansas).